The chain runs to 195 residues: Glycerol-3-phosphate acyltransferase (195 aa).

A run of 6 helical transmembrane segments spans residues 4–24 (GLIL…GLLL), 53–73 (GLAA…VLIA), 80–100 (TAVW…WLGF), 110–130 (LGVL…IWLA), 133–153 (FLFR…PIAL), and 154–174 (YFLS…IVFI).

It belongs to the PlsY family. As to quaternary structure, probably interacts with PlsX.

The protein localises to the cell inner membrane. The catalysed reaction is an acyl phosphate + sn-glycerol 3-phosphate = a 1-acyl-sn-glycero-3-phosphate + phosphate. Its pathway is lipid metabolism; phospholipid metabolism. Functionally, catalyzes the transfer of an acyl group from acyl-phosphate (acyl-PO(4)) to glycerol-3-phosphate (G3P) to form lysophosphatidic acid (LPA). This enzyme utilizes acyl-phosphate as fatty acyl donor, but not acyl-CoA or acyl-ACP. The polypeptide is Glycerol-3-phosphate acyltransferase (Mesorhizobium japonicum (strain LMG 29417 / CECT 9101 / MAFF 303099) (Mesorhizobium loti (strain MAFF 303099))).